The sequence spans 358 residues: UDP-N-acetylglucosamine--N-acetylmuramyl-(pentapeptide) pyrophosphoryl-undecaprenol N-acetylglucosamine transferase (358 aa).

UDP-N-acetyl-alpha-D-glucosamine contacts are provided by residues 11 to 13, asparagine 122, arginine 161, serine 189, isoleucine 243, 262 to 267, and glutamine 288; these read TGG and ALTVCE.

The protein belongs to the glycosyltransferase 28 family. MurG subfamily.

The protein localises to the cell inner membrane. It carries out the reaction di-trans,octa-cis-undecaprenyl diphospho-N-acetyl-alpha-D-muramoyl-L-alanyl-D-glutamyl-meso-2,6-diaminopimeloyl-D-alanyl-D-alanine + UDP-N-acetyl-alpha-D-glucosamine = di-trans,octa-cis-undecaprenyl diphospho-[N-acetyl-alpha-D-glucosaminyl-(1-&gt;4)]-N-acetyl-alpha-D-muramoyl-L-alanyl-D-glutamyl-meso-2,6-diaminopimeloyl-D-alanyl-D-alanine + UDP + H(+). It participates in cell wall biogenesis; peptidoglycan biosynthesis. Functionally, cell wall formation. Catalyzes the transfer of a GlcNAc subunit on undecaprenyl-pyrophosphoryl-MurNAc-pentapeptide (lipid intermediate I) to form undecaprenyl-pyrophosphoryl-MurNAc-(pentapeptide)GlcNAc (lipid intermediate II). This is UDP-N-acetylglucosamine--N-acetylmuramyl-(pentapeptide) pyrophosphoryl-undecaprenol N-acetylglucosamine transferase from Coxiella burnetii (strain Dugway 5J108-111).